We begin with the raw amino-acid sequence, 209 residues long: Na(+)-translocating NADH-quinone reductase subunit D (209 aa).

The next 5 helical transmembrane spans lie at 42–62 (LVMT…ISLI), 72–92 (IIVQ…ILQA), 103–123 (VFVG…AYAM), 131–151 (FMDG…VGFL), and 178–198 (NGLF…IWGL).

This sequence belongs to the NqrDE/RnfAE family. Composed of six subunits; NqrA, NqrB, NqrC, NqrD, NqrE and NqrF.

The protein resides in the cell inner membrane. The enzyme catalyses a ubiquinone + n Na(+)(in) + NADH + H(+) = a ubiquinol + n Na(+)(out) + NAD(+). Functionally, NQR complex catalyzes the reduction of ubiquinone-1 to ubiquinol by two successive reactions, coupled with the transport of Na(+) ions from the cytoplasm to the periplasm. NqrA to NqrE are probably involved in the second step, the conversion of ubisemiquinone to ubiquinol. This Photorhabdus laumondii subsp. laumondii (strain DSM 15139 / CIP 105565 / TT01) (Photorhabdus luminescens subsp. laumondii) protein is Na(+)-translocating NADH-quinone reductase subunit D.